Here is a 1074-residue protein sequence, read N- to C-terminus: Pleckstrin homology domain-containing family M member 1 (1074 aa).

The RUN domain occupies 40–182 (TSEDGDANTM…LSFELSYKSA (143 aa)). Disordered stretches follow at residues 214-244 (QRKESLDSISHSSGSEDIEVQHSGHKIRRNR), 272-336 (LQEN…MFQT), and 382-454 (DEKQ…PPQE). Position 218 is a phosphoserine (Ser-218). Polar residues-rich tracts occupy residues 313–329 (SKAQVNSAPSSGPNQEP) and 393–404 (PAQSTSDQQPSS). Phosphoserine occurs at positions 433, 436, and 491. The interval 506–526 (GNAQPAPAPAPAPAPAPAPAP) is disordered. A compositionally biased stretch (pro residues) spans 511–525 (APAPAPAPAPAPAPA). The 92-residue stretch at 551 to 642 (GLMKLGTVAR…WLDRVREALQ (92 aa)) folds into the PH 1 domain. The LIR motif lies at 649–655 (EDEWVNI). The disordered stretch occupies residues 661-680 (AEDAPEAPPDSLPPYSTLLP). The tract at residues 672 to 1074 (LPPYSTLLPE…RKYQEQNVVS (403 aa)) is interaction with RAB7A. Residues 701–795 (DAIKESLLYL…WRDLVRKVLA (95 aa)) form the PH 2 domain. A Phorbol-ester/DAG-type zinc finger spans residues 1004 to 1058 (QHVYHCDLCTQRGFICQICHHQDIIFPFEFDTTVRCAECRTVFHQSCQAVVRKGC).

Interacts (via N- and C-terminus) with RAB7A (GTP-bound form). Simultaneously interacts with RAB7A and ARL8B; bringing about clustering and fusion of late endosomes and lysosomes. Interacts (via RUN domain) with ARL8B (GTP-bound form); the interaction is required for PLEKHM1 localization to lysosomes and for ARL8B function in delivery and degradation of endocytic and autophagic cargo in lysosomes. PLEKHM1 and PLEKHM2 compete for interaction with ARL8B. Interacts with ARL8A; the interaction is weaker than with ARL8B. Interacts with VPS41, VPS11, VPS18, VPS33A and VPS39; indicative for an association with the HOPS complex; the interactions with, at least, VPS41, VPS11, VPS18 and VPS33A require ARL8B. Interacts with GABARAP, GABARAPL, GABARAPL2, MAP1LC3A, MAP1LC3B and MAP1LC3C. Interacts with PAFAH1B. Interacts (via N- and C-terminus) with NDEL1. Interacts (via C-terminus) with MAP3K7. Interacts (via N- and C-terminus) with FAM98A. Interacts (via C-terminus) with DEF8; this interaction is weak but increased in a RAB7A-dependent manner. May interact with sialyl-lex-positive protein.

It localises to the autolysosome membrane. Its subcellular location is the endosome membrane. The protein resides in the late endosome membrane. The protein localises to the lysosome membrane. In terms of biological role, acts as a multivalent adapter protein that regulates Rab7-dependent and HOPS complex-dependent fusion events in the endolysosomal system and couples autophagic and the endocytic trafficking pathways. Acts as a dual effector of RAB7A and ARL8B that simultaneously binds these GTPases, bringing about clustering and fusion of late endosomes and lysosomes. Required for late stages of endolysosomal maturation, facilitating both endocytosis-mediated degradation of growth factor receptors and autophagosome clearance. Interaction with Arl8b is a crucial factor in the terminal maturation of autophagosomes and to mediate autophagosome-lysosome fusion. Positively regulates lysosome peripheral distribution and ruffled border formation in osteoclasts. May be involved in negative regulation of endocytic transport from early endosome to late endosome/lysosome implicating its association with Rab7. May have a role in sialyl-lex-mediated transduction of apoptotic signals. Involved in bone resorption. This is Pleckstrin homology domain-containing family M member 1 from Mus musculus (Mouse).